We begin with the raw amino-acid sequence, 275 residues long: tRNA pseudouridine synthase A (275 aa).

Aspartate 56 acts as the Nucleophile in catalysis. Residue tyrosine 114 coordinates substrate.

The protein belongs to the tRNA pseudouridine synthase TruA family. As to quaternary structure, homodimer.

It catalyses the reaction uridine(38/39/40) in tRNA = pseudouridine(38/39/40) in tRNA. Its function is as follows. Formation of pseudouridine at positions 38, 39 and 40 in the anticodon stem and loop of transfer RNAs. This Polynucleobacter asymbioticus (strain DSM 18221 / CIP 109841 / QLW-P1DMWA-1) (Polynucleobacter necessarius subsp. asymbioticus) protein is tRNA pseudouridine synthase A.